The following is a 183-amino-acid chain: Ferritin heavy polypeptide-like 17 (183 aa).

The Ferritin-like diiron domain maps to 11–160; that stretch reads QKYDTNCDAA…GYVSNLRKIC (150 aa). The Fe cation site is built by Glu28, His66, Glu108, and Gln142.

Belongs to the ferritin family. As to expression, testis specific. Also expressed in several cancers.

The sequence is that of Ferritin heavy polypeptide-like 17 (FTHL17) from Homo sapiens (Human).